Reading from the N-terminus, the 150-residue chain is 3-dehydroquinate dehydratase (150 aa).

Tyr26 functions as the Proton acceptor in the catalytic mechanism. Positions 77, 83, and 90 each coordinate substrate. His103 functions as the Proton donor in the catalytic mechanism. Substrate contacts are provided by residues 104-105 (LS) and Arg114.

The protein belongs to the type-II 3-dehydroquinase family. As to quaternary structure, homododecamer.

It catalyses the reaction 3-dehydroquinate = 3-dehydroshikimate + H2O. The protein operates within metabolic intermediate biosynthesis; chorismate biosynthesis; chorismate from D-erythrose 4-phosphate and phosphoenolpyruvate: step 3/7. Catalyzes a trans-dehydration via an enolate intermediate. This Citrobacter koseri (strain ATCC BAA-895 / CDC 4225-83 / SGSC4696) protein is 3-dehydroquinate dehydratase.